A 332-amino-acid polypeptide reads, in one-letter code: 5-dehydro-2-deoxygluconokinase (332 aa).

The protein belongs to the carbohydrate kinase PfkB family.

The enzyme catalyses 5-dehydro-2-deoxy-D-gluconate + ATP = 6-phospho-5-dehydro-2-deoxy-D-gluconate + ADP + H(+). The protein operates within polyol metabolism; myo-inositol degradation into acetyl-CoA; acetyl-CoA from myo-inositol: step 5/7. In terms of biological role, catalyzes the phosphorylation of 5-dehydro-2-deoxy-D-gluconate (2-deoxy-5-keto-D-gluconate or DKG) to 6-phospho-5-dehydro-2-deoxy-D-gluconate (DKGP). This chain is 5-dehydro-2-deoxygluconokinase, found in Bacillus thuringiensis (strain Al Hakam).